The primary structure comprises 157 residues: S-ribosylhomocysteine lyase (157 aa).

3 residues coordinate Fe cation: His54, His58, and Cys124.

The protein belongs to the LuxS family. Homodimer. Fe cation serves as cofactor.

It catalyses the reaction S-(5-deoxy-D-ribos-5-yl)-L-homocysteine = (S)-4,5-dihydroxypentane-2,3-dione + L-homocysteine. In terms of biological role, involved in the synthesis of autoinducer 2 (AI-2) which is secreted by bacteria and is used to communicate both the cell density and the metabolic potential of the environment. The regulation of gene expression in response to changes in cell density is called quorum sensing. Catalyzes the transformation of S-ribosylhomocysteine (RHC) to homocysteine (HC) and 4,5-dihydroxy-2,3-pentadione (DPD). In Oenococcus oeni (strain ATCC BAA-331 / PSU-1), this protein is S-ribosylhomocysteine lyase.